A 279-amino-acid chain; its full sequence is Pantothenate synthetase (279 aa).

31–38 lines the ATP pocket; the sequence is MGALHEGH. Histidine 38 serves as the catalytic Proton donor. Glutamine 62 serves as a coordination point for (R)-pantoate. Glutamine 62 contacts beta-alanine. 148-151 provides a ligand contact to ATP; the sequence is GEKD. Residue glutamine 154 participates in (R)-pantoate binding. ATP contacts are provided by residues valine 177 and 185 to 188; that span reads LSSR.

Belongs to the pantothenate synthetase family. As to quaternary structure, homodimer.

It is found in the cytoplasm. The catalysed reaction is (R)-pantoate + beta-alanine + ATP = (R)-pantothenate + AMP + diphosphate + H(+). The protein operates within cofactor biosynthesis; (R)-pantothenate biosynthesis; (R)-pantothenate from (R)-pantoate and beta-alanine: step 1/1. In terms of biological role, catalyzes the condensation of pantoate with beta-alanine in an ATP-dependent reaction via a pantoyl-adenylate intermediate. The polypeptide is Pantothenate synthetase (Cereibacter sphaeroides (strain ATCC 17029 / ATH 2.4.9) (Rhodobacter sphaeroides)).